The following is a 163-amino-acid chain: Nucleotide-binding protein RBAM_011030 (163 aa).

This sequence belongs to the YajQ family.

In terms of biological role, nucleotide-binding protein. The polypeptide is Nucleotide-binding protein RBAM_011030 (Bacillus velezensis (strain DSM 23117 / BGSC 10A6 / LMG 26770 / FZB42) (Bacillus amyloliquefaciens subsp. plantarum)).